Here is a 231-residue protein sequence, read N- to C-terminus: Large ribosomal subunit protein uL1 (231 aa).

This sequence belongs to the universal ribosomal protein uL1 family. As to quaternary structure, part of the 50S ribosomal subunit.

Binds directly to 23S rRNA. The L1 stalk is quite mobile in the ribosome, and is involved in E site tRNA release. Its function is as follows. Protein L1 is also a translational repressor protein, it controls the translation of the L11 operon by binding to its mRNA. This is Large ribosomal subunit protein uL1 from Paracidovorax citrulli (strain AAC00-1) (Acidovorax citrulli).